A 375-amino-acid chain; its full sequence is 1-deoxy-D-xylulose 5-phosphate reductoisomerase (375 aa).

The NADPH site is built by threonine 10, glycine 11, serine 12, valine 13, lysine 37, and asparagine 114. Lysine 115 is a binding site for 1-deoxy-D-xylulose 5-phosphate. Glutamate 116 provides a ligand contact to NADPH. A Mn(2+)-binding site is contributed by aspartate 136. 4 residues coordinate 1-deoxy-D-xylulose 5-phosphate: serine 137, glutamate 138, serine 162, and histidine 185. Glutamate 138 lines the Mn(2+) pocket. NADPH is bound at residue glycine 191. 1-deoxy-D-xylulose 5-phosphate contacts are provided by serine 198, asparagine 203, lysine 204, and glutamate 207. Glutamate 207 provides a ligand contact to Mn(2+).

The protein belongs to the DXR family. It depends on Mg(2+) as a cofactor. Mn(2+) is required as a cofactor.

The catalysed reaction is 2-C-methyl-D-erythritol 4-phosphate + NADP(+) = 1-deoxy-D-xylulose 5-phosphate + NADPH + H(+). Its pathway is isoprenoid biosynthesis; isopentenyl diphosphate biosynthesis via DXP pathway; isopentenyl diphosphate from 1-deoxy-D-xylulose 5-phosphate: step 1/6. Its function is as follows. Catalyzes the NADPH-dependent rearrangement and reduction of 1-deoxy-D-xylulose-5-phosphate (DXP) to 2-C-methyl-D-erythritol 4-phosphate (MEP). The polypeptide is 1-deoxy-D-xylulose 5-phosphate reductoisomerase (Sulfurihydrogenibium sp. (strain YO3AOP1)).